The chain runs to 229 residues: NAD-dependent protein deacylase (229 aa).

The Deacetylase sirtuin-type domain occupies 1 to 227; the sequence is MKNLVILSGA…QDLMPKLIEM (227 aa). 9-28 is an NAD(+) binding site; that stretch reads GAGISAESGIKTFRDADGLW. Substrate-binding residues include Tyr-53 and Arg-56. 86–89 is an NAD(+) binding site; that stretch reads QNVD. His-104 acts as the Proton acceptor in catalysis. Residue 169–171 participates in NAD(+) binding; the sequence is GTS.

The protein belongs to the sirtuin family. Class III subfamily.

It localises to the cytoplasm. The enzyme catalyses N(6)-acetyl-L-lysyl-[protein] + NAD(+) + H2O = 2''-O-acetyl-ADP-D-ribose + nicotinamide + L-lysyl-[protein]. The catalysed reaction is N(6)-succinyl-L-lysyl-[protein] + NAD(+) + H2O = 2''-O-succinyl-ADP-D-ribose + nicotinamide + L-lysyl-[protein]. Functionally, NAD-dependent lysine deacetylase and desuccinylase that specifically removes acetyl and succinyl groups on target proteins. Modulates the activities of several proteins which are inactive in their acylated form. In Helicobacter pylori (strain ATCC 700392 / 26695) (Campylobacter pylori), this protein is NAD-dependent protein deacylase.